The chain runs to 42 residues: Pollen allergen Sal k 1 (42 aa).

This Kali turgidum (Prickly saltwort) protein is Pollen allergen Sal k 1.